Consider the following 218-residue polypeptide: MTQDEMKKAAGWAALKYVEKGSIVGVGTGSTVNHFIDALGTIKDDIKGAVSSSVASTERLKELGIEVFECNDVIKLDVYVDGADEINHAREMIKGGGAALTREKIVAAISEKFVCIVDDTKAVDVLGQFPLPVEVIPMARSYVARELVKLGGDPAYREGVVTDNGNIILDVHNMQITNPKEMEDKINGIAGVVTVGLFAHRGADVVITGTPEGAKIEE.

Substrate is bound by residues 28–31, 81–84, and 94–97; these read TGST, DGAD, and KGGG. Glu103 (proton acceptor) is an active-site residue. Lys121 is a substrate binding site.

This sequence belongs to the ribose 5-phosphate isomerase family. Homodimer.

It carries out the reaction aldehydo-D-ribose 5-phosphate = D-ribulose 5-phosphate. Its pathway is carbohydrate degradation; pentose phosphate pathway; D-ribose 5-phosphate from D-ribulose 5-phosphate (non-oxidative stage): step 1/1. Functionally, catalyzes the reversible conversion of ribose-5-phosphate to ribulose 5-phosphate. In Vibrio parahaemolyticus serotype O3:K6 (strain RIMD 2210633), this protein is Ribose-5-phosphate isomerase A.